A 244-amino-acid chain; its full sequence is 3-deoxy-manno-octulosonate cytidylyltransferase (244 aa).

The protein belongs to the KdsB family.

It localises to the cytoplasm. The enzyme catalyses 3-deoxy-alpha-D-manno-oct-2-ulosonate + CTP = CMP-3-deoxy-beta-D-manno-octulosonate + diphosphate. It participates in nucleotide-sugar biosynthesis; CMP-3-deoxy-D-manno-octulosonate biosynthesis; CMP-3-deoxy-D-manno-octulosonate from 3-deoxy-D-manno-octulosonate and CTP: step 1/1. It functions in the pathway bacterial outer membrane biogenesis; lipopolysaccharide biosynthesis. Its function is as follows. Activates KDO (a required 8-carbon sugar) for incorporation into bacterial lipopolysaccharide in Gram-negative bacteria. This chain is 3-deoxy-manno-octulosonate cytidylyltransferase, found in Synechococcus elongatus (strain ATCC 33912 / PCC 7942 / FACHB-805) (Anacystis nidulans R2).